The sequence spans 181 residues: Der GTPase-activating protein YihI (181 aa).

2 disordered regions span residues 1 to 75 and 145 to 181; these read MSRK…KKIP and EPEAEEEFEDEAPVRKSRSDDDLLADFEDFDMDDYKG. Positions 32-43 are enriched in basic residues; the sequence is RLRKKDKKRKGL. Residues 146–155 are compositionally biased toward acidic residues; sequence PEAEEEFEDE. A compositionally biased stretch (basic and acidic residues) spans 156–165; the sequence is APVRKSRSDD. Residues 166-181 are compositionally biased toward acidic residues; that stretch reads DLLADFEDFDMDDYKG.

Belongs to the YihI family. In terms of assembly, interacts with Der.

A GTPase-activating protein (GAP) that modifies Der/EngA GTPase function. May play a role in ribosome biogenesis. The sequence is that of Der GTPase-activating protein YihI from Vibrio vulnificus (strain YJ016).